The primary structure comprises 309 residues: Ribosomal RNA large subunit methyltransferase F (309 aa).

The tract at residues 1 to 21 (MASQHDKKSVQSGLLHPRNPH) is disordered.

Belongs to the methyltransferase superfamily. METTL16/RlmF family.

It is found in the cytoplasm. It catalyses the reaction adenosine(1618) in 23S rRNA + S-adenosyl-L-methionine = N(6)-methyladenosine(1618) in 23S rRNA + S-adenosyl-L-homocysteine + H(+). In terms of biological role, specifically methylates the adenine in position 1618 of 23S rRNA. This Desulfotalea psychrophila (strain LSv54 / DSM 12343) protein is Ribosomal RNA large subunit methyltransferase F.